The sequence spans 1215 residues: Zinc finger SWIM domain-containing protein 6 (1215 aa).

Disordered regions lie at residues 1–46 (MAER…RPGP) and 133–161 (AAGG…SPAA). Gly residues-rich tracts occupy residues 18–38 (PGGG…GGGY) and 133–155 (AAGG…GGGS). Residues 246–283 (CNVAISFDRCKITSVTCSCGNKDIFYCAHVVALSLYRI) form an SWIM-type zinc finger.

Functionally, involved in nervous system development, important for striatal morphology and motor regulation. The polypeptide is Zinc finger SWIM domain-containing protein 6 (Homo sapiens (Human)).